Consider the following 264-residue polypeptide: Thiazole synthase (264 aa).

The Schiff-base intermediate with DXP role is filled by K101. 1-deoxy-D-xylulose 5-phosphate contacts are provided by residues G162, 189 to 190 (AG), and 211 to 212 (NT). A disordered region spans residues 245-264 (KRQTASPSTPTLGQPFWHNQ).

It belongs to the ThiG family. Homotetramer. Forms heterodimers with either ThiH or ThiS.

It is found in the cytoplasm. The catalysed reaction is [ThiS sulfur-carrier protein]-C-terminal-Gly-aminoethanethioate + 2-iminoacetate + 1-deoxy-D-xylulose 5-phosphate = [ThiS sulfur-carrier protein]-C-terminal Gly-Gly + 2-[(2R,5Z)-2-carboxy-4-methylthiazol-5(2H)-ylidene]ethyl phosphate + 2 H2O + H(+). It participates in cofactor biosynthesis; thiamine diphosphate biosynthesis. Its function is as follows. Catalyzes the rearrangement of 1-deoxy-D-xylulose 5-phosphate (DXP) to produce the thiazole phosphate moiety of thiamine. Sulfur is provided by the thiocarboxylate moiety of the carrier protein ThiS. In vitro, sulfur can be provided by H(2)S. This Cellvibrio japonicus (strain Ueda107) (Pseudomonas fluorescens subsp. cellulosa) protein is Thiazole synthase.